Consider the following 113-residue polypeptide: Putative increased recombination centers protein 14 (113 aa).

In Saccharomyces cerevisiae (strain ATCC 204508 / S288c) (Baker's yeast), this protein is Putative increased recombination centers protein 14 (IRC14).